The chain runs to 429 residues: BURP domain-containing protein 3 (429 aa).

Residues 1–21 (MDRLLACLLGFLLIASVGSHA) form the signal peptide. The segment at 59–81 (GGGVHVDAGHGKPGGTTVDVGKG) is disordered. The BURP domain occupies 213 to 428 (FFLEKDLHPG…PQDHVVWTRS (216 aa)).

In terms of tissue distribution, expressed in stems, leaves, shoot, panicles and stamen.

This is BURP domain-containing protein 3 (BURP3) from Oryza sativa subsp. japonica (Rice).